Here is a 430-residue protein sequence, read N- to C-terminus: GTPase Obg (430 aa).

The 158-residue stretch at 1–158 folds into the Obg domain; that stretch reads MFVDQVKISL…LDVSLELKLL (158 aa). The tract at residues 118–145 is disordered; that stretch reads KGGRGGRGNSRFATPRNPAPDFSEKGEP. The 171-residue stretch at 159 to 329 folds into the OBG-type G domain; the sequence is ADVGLVGFPS…LLYAIADKLE (171 aa). Residues 165 to 172, 190 to 194, 212 to 215, 282 to 285, and 310 to 312 contribute to the GTP site; these read GFPSVGKS, FTTIK, DLPG, NKMD, and STI. Mg(2+) is bound by residues serine 172 and threonine 192. One can recognise an OCT domain in the interval 352-430; it reads KHTPSQDKFT…ILGGEFEFVE (79 aa).

It belongs to the TRAFAC class OBG-HflX-like GTPase superfamily. OBG GTPase family. As to quaternary structure, monomer. Requires Mg(2+) as cofactor.

The protein resides in the cytoplasm. Functionally, an essential GTPase which binds GTP, GDP and possibly (p)ppGpp with moderate affinity, with high nucleotide exchange rates and a fairly low GTP hydrolysis rate. Plays a role in control of the cell cycle, stress response, ribosome biogenesis and in those bacteria that undergo differentiation, in morphogenesis control. This Staphylococcus aureus (strain Mu3 / ATCC 700698) protein is GTPase Obg.